A 102-amino-acid polypeptide reads, in one-letter code: Urease subunit beta (102 aa).

Belongs to the urease beta subunit family. In terms of assembly, heterotrimer of UreA (gamma), UreB (beta) and UreC (alpha) subunits. Three heterotrimers associate to form the active enzyme.

Its subcellular location is the cytoplasm. The catalysed reaction is urea + 2 H2O + H(+) = hydrogencarbonate + 2 NH4(+). It functions in the pathway nitrogen metabolism; urea degradation; CO(2) and NH(3) from urea (urease route): step 1/1. This is Urease subunit beta from Acinetobacter baylyi (strain ATCC 33305 / BD413 / ADP1).